Consider the following 1363-residue polypeptide: MFLILLISLPMAFAVIGDLKCTTVSINDVDTGAPSISTDIVDVTNGLGTYYVLDRVYLNTTLLLNGYYPTSGSTYRNMALKGTLLLSRLWFKPPFLSDFINGIFAKVKNTKVIKKGVMYSEFPAITIGSTFVNTSYSVVVQPHTTNLDNKLQGLLEISVCQYTMCEYPHTICHPNLGNKRVELWHWDTGVVSCLYKRNFTYDVNADYLYFHFYQEGGTFYAYFTDTGVVTKFLFNVYLGTVLSHYYVLPLTCSSAMTLEYWVTPLTSKQYLLAFNQDGVIFNAVDCKSDFMSEIKCKTLSIAPSTGVYELNGYTVQPIADVYRRIPNLPDCNIEAWLNDKSVPSPLNWERKTFSNCNFNMSSLMSFIQADSFTCNNIDAAKIYGMCFSSITIDKFAIPNGRKVDLQLGNLGYLQSFNYRIDTTATSCQLYYNLPAANVSVSRFNPSTWNRRFGFTEQFVFKPQPVGVFTHHDVVYAQHCFKAPSNFCPCKLDGSLCVGNGPGIDAGYKNSGIGTCPAGTNYLTCHNAAQCNCLCTPDPITSKSTGPYKCPQTKYLVGIGEHCSGLAIKSDYCGGNPCTCQPQAFLGWSVDSCLQGDRCNIFANFILHDVNSGTTCSTDLQKSNTDIILGVCVNYDLYGITGQGIFVEVNATYYNSWQNLLYDSNGNLYGFRDYLTNRTFMIRSCYSGRVSAAFHANSSEPALLFRNIKCNYVFNNTLSRQLQPINYFDSYLGCVVNADNSTSSVVQTCDLTVGSGYCVDYSTKRRSRRAITTGYRFTTFEPFTVNSVNDSLEPVGGLYEIQIPSEFTIGNMEEFIQTSSPKVTIDCSAFVCGDYAACKSQLVEYGSFCDNINAILTEVNELLDTTQLQVANSLMNGVTLSTKLKDGVNFNVDDINFSPVLGCLGSDCNKVSSRSAIEDLLFSKVKLSDVGFVEAYNNCTGGAEIRDLICVQSYNGIKVLPPLLSVNQISGYTLAATSASLFPPLSAAVGVPFYLNVQYRINGIGVTMDVLSQNQKLIANAFNNALDAIQEGFDATNSALVKIQAVVNANAEALNNLLQQLSNRFGAISSSLQEILSRLDALEAQAQIDRLINGRLTALNVYVSQQLSDSTLVKFSAAQAMEKVNECVKSQSSRINFCGNGNHIISLVQNAPYGLYFIHFSYVPTKYVTAKVSPGLCIAGDRGIAPKSGYFVNVNNTWMFTGSGYYYPEPITGNNVVVMSTCAVNYTKAPDVMLNISTPNLHDFKEELDQWFKNQTSVAPDLSLDYINVTFLDLQDEMNRLQEAIKVLNQSYINLKDIGTYEYYVKWPWYVWLLIGFAGVAMLVLLFFICCCTGCGTSCFKICGGCCDDYTGHQELVIKTSHDD.

Positions 1 to 13 (MFLILLISLPMAF) are cleaved as a signal peptide. The Extracellular portion of the chain corresponds to 14–1307 (AVIGDLKCTT…GTYEYYVKWP (1294 aa)). In terms of domain architecture, BetaCoV S1-NTD spans 15–298 (VIGDLKCTTV…DFMSEIKCKT (284 aa)). 5 disulfide bridges follow: Cys21/Cys165, Cys160/Cys193, Cys172/Cys252, Cys286/Cys296, and Cys331/Cys356. Asn59 and Asn133 each carry an N-linked (GlcNAc...) asparagine; by host glycan. N-linked (GlcNAc...) asparagine; by host glycosylation is present at Asn198. A BetaCoV S1-CTD domain is found at 329-617 (PDCNIEAWLN…DVNSGTTCST (289 aa)). N-linked (GlcNAc...) asparagine; by host glycosylation occurs at Asn359. 2 disulfide bridges follow: Cys374–Cys427 and Cys386–Cys615. Asn437, Asn649, Asn676, Asn696, Asn714, Asn739, and Asn788 each carry an N-linked (GlcNAc...) asparagine; by host glycan. 2 fusion peptide regions span residues 914–935 (SAIE…VEAY) and 933–953 (EAYN…VQSY). N-linked (GlcNAc...) asparagine; by host glycosylation occurs at Asn937. Cys938 and Cys949 are joined by a disulfide. Positions 1014-1064 (QKLIANAFNNALDAIQEGFDATNSALVKIQAVVNANAEALNNLLQQLSNRF) are heptad repeat 1. Residues 1043-1087 (QAVVNANAEALNNLLQQLSNRFGAISSSLQEILSRLDALEAQAQI) are a coiled coil. Residues Asn1194, Asn1224, Asn1234, Asn1253, Asn1267, and Asn1288 are each glycosylated (N-linked (GlcNAc...) asparagine; by host). The segment at 1258–1296 (APDLSLDYINVTFLDLQDEMNRLQEAIKVLNQSYINLKD) is heptad repeat 2. Positions 1269-1297 (TFLDLQDEMNRLQEAIKVLNQSYINLKDI) form a coiled coil. A helical membrane pass occupies residues 1308-1328 (WYVWLLIGFAGVAMLVLLFFI). At 1329-1363 (CCCTGCGTSCFKICGGCCDDYTGHQELVIKTSHDD) the chain is on the cytoplasmic side. Residues 1359–1363 (TSHDD) carry the KxHxx motif.

Belongs to the betacoronaviruses spike protein family. As to quaternary structure, homotrimer; each monomer consists of a S1 and a S2 subunit. The resulting peplomers protrude from the virus surface as spikes. In terms of processing, specific enzymatic cleavages in vivo yield mature proteins. The precursor is processed into S1 and S2 by host cell furin or another cellular protease to yield the mature S1 and S2 proteins. Additionally, a second cleavage leads to the release of a fusion peptide after viral attachment to host cell receptor. The cytoplasmic Cys-rich domain is palmitoylated. Spike glycoprotein is digested within host endosomes.

The protein resides in the virion membrane. The protein localises to the host endoplasmic reticulum-Golgi intermediate compartment membrane. It localises to the host cell membrane. Its function is as follows. Attaches the virion to the cell membrane by interacting with host receptor, initiating the infection. Mediates fusion of the virion and cellular membranes by acting as a class I viral fusion protein. Under the current model, the protein has at least three conformational states: pre-fusion native state, pre-hairpin intermediate state, and post-fusion hairpin state. During viral and target cell membrane fusion, the coiled coil regions (heptad repeats) assume a trimer-of-hairpins structure, positioning the fusion peptide in close proximity to the C-terminal region of the ectodomain. The formation of this structure appears to drive apposition and subsequent fusion of viral and target cell membranes. Functionally, acts as a viral fusion peptide which is unmasked following S2 cleavage occurring upon virus endocytosis. The polypeptide is Spike glycoprotein (Bos taurus (Bovine)).